A 126-amino-acid chain; its full sequence is Large ribosomal subunit protein bL12 (126 aa).

It belongs to the bacterial ribosomal protein bL12 family. Homodimer. Part of the ribosomal stalk of the 50S ribosomal subunit. Forms a multimeric L10(L12)X complex, where L10 forms an elongated spine to which 2 to 4 L12 dimers bind in a sequential fashion. Binds GTP-bound translation factors.

Forms part of the ribosomal stalk which helps the ribosome interact with GTP-bound translation factors. Is thus essential for accurate translation. The chain is Large ribosomal subunit protein bL12 from Helicobacter hepaticus (strain ATCC 51449 / 3B1).